The primary structure comprises 362 residues: 3-isopropylmalate dehydrogenase (362 aa).

78–91 lines the NAD(+) pocket; sequence GPKWESLPPDEQPE. Substrate is bound by residues Arg99, Arg109, Arg138, and Asp227. The Mg(2+) site is built by Asp227, Asp251, and Asp255. 285-297 is a binding site for NAD(+); the sequence is GSAPDIAGQGIAN.

This sequence belongs to the isocitrate and isopropylmalate dehydrogenases family. LeuB type 1 subfamily. In terms of assembly, homodimer. Mg(2+) serves as cofactor. Mn(2+) is required as a cofactor.

The protein localises to the cytoplasm. The enzyme catalyses (2R,3S)-3-isopropylmalate + NAD(+) = 4-methyl-2-oxopentanoate + CO2 + NADH. It functions in the pathway amino-acid biosynthesis; L-leucine biosynthesis; L-leucine from 3-methyl-2-oxobutanoate: step 3/4. Catalyzes the oxidation of 3-carboxy-2-hydroxy-4-methylpentanoate (3-isopropylmalate) to 3-carboxy-4-methyl-2-oxopentanoate. The product decarboxylates to 4-methyl-2 oxopentanoate. This chain is 3-isopropylmalate dehydrogenase, found in Geobacter sulfurreducens (strain ATCC 51573 / DSM 12127 / PCA).